The following is a 934-amino-acid chain: Translation initiation factor IF-2 (934 aa).

The tract at residues 54 to 323 is disordered; the sequence is AQESKPTTPP…KRQKRNEYEA (270 aa). Low complexity-rich tracts occupy residues 80-154, 185-197, 206-231, and 238-250; these read PKPG…AGKP, RGGA…PRPG, GQAP…PGAA, and RPSP…TPSP. The segment covering 260-303 has biased composition (gly residues); sequence GFGGGRGRGGRPGGPGGPGGPGGPGPRGGRGGRRGGTAGAFGRP. Residues 308 to 317 are compositionally biased toward basic residues; sequence RRGRKSKRQK. The region spanning 430-602 is the tr-type G domain; sequence QRPPVVTVMG…VLLTADASLD (173 aa). Positions 439-446 are G1; it reads GHVDHGKT. GTP is bound at residue 439–446; it reads GHVDHGKT. The tract at residues 464 to 468 is G2; it reads GITQH. A G3 region spans residues 489–492; the sequence is DTPG. GTP contacts are provided by residues 489–493 and 543–546; these read DTPGH and NKID. The tract at residues 543–546 is G4; the sequence is NKID. Residues 579–581 are G5; the sequence is SAK.

Belongs to the TRAFAC class translation factor GTPase superfamily. Classic translation factor GTPase family. IF-2 subfamily.

It localises to the cytoplasm. Its function is as follows. One of the essential components for the initiation of protein synthesis. Protects formylmethionyl-tRNA from spontaneous hydrolysis and promotes its binding to the 30S ribosomal subunits. Also involved in the hydrolysis of GTP during the formation of the 70S ribosomal complex. This chain is Translation initiation factor IF-2, found in Corynebacterium urealyticum (strain ATCC 43042 / DSM 7109).